Consider the following 138-residue polypeptide: Large ribosomal subunit protein uL16 (138 aa).

Residues methionine 1 to glutamine 13 are compositionally biased toward basic residues. The disordered stretch occupies residues methionine 1–glycine 24.

This sequence belongs to the universal ribosomal protein uL16 family. As to quaternary structure, part of the 50S ribosomal subunit.

In terms of biological role, binds 23S rRNA and is also seen to make contacts with the A and possibly P site tRNAs. This chain is Large ribosomal subunit protein uL16, found in Burkholderia ambifaria (strain ATCC BAA-244 / DSM 16087 / CCUG 44356 / LMG 19182 / AMMD) (Burkholderia cepacia (strain AMMD)).